A 212-amino-acid chain; its full sequence is MSVRVKVCGVTRLSDAVAAWEAGVDALGLNFYPKSPRYLDLPTAAALARTRPPLGTVLGVFVNAAPDTIRETVRACGLTAVQLHGDEPPEACSGYGVPVIKALRVTGPEDVVRARTYVGVGDVAGLLLDGAAPGYGGGGVGFDWSLVAGLAGSGVPVLVAGGLRPSNVAEAVRATRPYGVDVASGVESAPGIKDVEAVRAFVRAAKSINLWE.

This sequence belongs to the TrpF family.

It carries out the reaction N-(5-phospho-beta-D-ribosyl)anthranilate = 1-(2-carboxyphenylamino)-1-deoxy-D-ribulose 5-phosphate. The protein operates within amino-acid biosynthesis; L-tryptophan biosynthesis; L-tryptophan from chorismate: step 3/5. The protein is N-(5'-phosphoribosyl)anthranilate isomerase of Myxococcus xanthus (strain DK1622).